The chain runs to 260 residues: Manganese transport system ATP-binding protein MntA (260 aa).

In terms of domain architecture, ABC transporter spans 10-245; it reads ISVDGVSVTY…NLELTFGGLP (236 aa). Residue 43-50 participates in ATP binding; sequence GPNGSGKS.

This sequence belongs to the ABC transporter superfamily.

Its function is as follows. Part of an ATP-driven transport system for manganese. This chain is Manganese transport system ATP-binding protein MntA (mntA), found in Synechocystis sp. (strain ATCC 27184 / PCC 6803 / Kazusa).